Consider the following 172-residue polypeptide: MEYFNVGKIVNTQGLQGEMRVLSVSDFAEERFKKGSQLALFDDKDQFVQEVTIVSHRKQKHFDIIKFKDMYHINAIEKYKGYTLKVSKANQGDLQEGEFYYHQIIGMAVYEKDRLIGYVKEILQPGANDVWVVKRQGKRDLLLPYIPPVVLSVDVPNKRVDVELMEGLDDED.

One can recognise a PRC barrel domain in the interval 96–168 (EGEFYYHQII…RVDVELMEGL (73 aa)).

This sequence belongs to the RimM family. In terms of assembly, binds ribosomal protein uS19.

It localises to the cytoplasm. Its function is as follows. An accessory protein needed during the final step in the assembly of 30S ribosomal subunit, possibly for assembly of the head region. Essential for efficient processing of 16S rRNA. May be needed both before and after RbfA during the maturation of 16S rRNA. It has affinity for free ribosomal 30S subunits but not for 70S ribosomes. The sequence is that of Ribosome maturation factor RimM from Streptococcus pyogenes serotype M18 (strain MGAS8232).